The following is a 678-amino-acid chain: DNA ligase (678 aa).

NAD(+) contacts are provided by residues 34-38 (DSEYD), 83-84 (SL), and Glu-114. Lys-116 (N6-AMP-lysine intermediate) is an active-site residue. The NAD(+) site is built by Arg-137, Glu-176, Lys-293, and Lys-317. Residues Cys-411, Cys-414, Cys-429, and Cys-435 each contribute to the Zn(2+) site. The BRCT domain maps to 594 to 678 (PTRQPLNGES…LMAGYGQTLS (85 aa)).

It belongs to the NAD-dependent DNA ligase family. LigA subfamily. Mg(2+) serves as cofactor. Requires Mn(2+) as cofactor.

The enzyme catalyses NAD(+) + (deoxyribonucleotide)n-3'-hydroxyl + 5'-phospho-(deoxyribonucleotide)m = (deoxyribonucleotide)n+m + AMP + beta-nicotinamide D-nucleotide.. Its function is as follows. DNA ligase that catalyzes the formation of phosphodiester linkages between 5'-phosphoryl and 3'-hydroxyl groups in double-stranded DNA using NAD as a coenzyme and as the energy source for the reaction. It is essential for DNA replication and repair of damaged DNA. In Acinetobacter baumannii (strain AB307-0294), this protein is DNA ligase.